Consider the following 673-residue polypeptide: Fatty acyl-CoA synthetase B (673 aa).

Residues 1-18 (MINNWLAVGLLVVSGILA) form the signal peptide. Asparagine 267 carries N-linked (GlcNAc...) asparagine glycosylation.

Belongs to the ATP-dependent AMP-binding enzyme family.

It localises to the endoplasmic reticulum. The catalysed reaction is a long-chain fatty acid + ATP + CoA = a long-chain fatty acyl-CoA + AMP + diphosphate. Functionally, long chain fatty acid acyl-CoA synthetases catalyze the formation of a thiester bond between a free fatty acid and coenzyme A during fatty acid metabolic process. This Dictyostelium discoideum (Social amoeba) protein is Fatty acyl-CoA synthetase B (fcsB).